Here is a 592-residue protein sequence, read N- to C-terminus: A-type ATP synthase subunit A (592 aa).

Position 233–240 (233–240) interacts with ATP; sequence GPFGSGKT.

It belongs to the ATPase alpha/beta chains family. Has multiple subunits with at least A(3), B(3), C, D, E, F, H, I and proteolipid K(x).

The protein localises to the cell membrane. The enzyme catalyses ATP + H2O + 4 H(+)(in) = ADP + phosphate + 5 H(+)(out). Its function is as follows. Component of the A-type ATP synthase that produces ATP from ADP in the presence of a proton gradient across the membrane. The A chain is the catalytic subunit. The sequence is that of A-type ATP synthase subunit A from Saccharolobus islandicus (strain M.16.27) (Sulfolobus islandicus).